The sequence spans 754 residues: 5-methyltetrahydropteroyltriglutamate--homocysteine methyltransferase (754 aa).

Residues Arg-17–Lys-20 and Lys-117 each bind 5-methyltetrahydropteroyltri-L-glutamate. L-homocysteine is bound by residues Ile-431 to Ser-433 and Glu-484. L-methionine contacts are provided by residues Ile-431–Ser-433 and Glu-484. 5-methyltetrahydropteroyltri-L-glutamate is bound by residues Arg-515–Cys-516 and Trp-561. Asp-599 contacts L-homocysteine. Asp-599 provides a ligand contact to L-methionine. Glu-605 is a 5-methyltetrahydropteroyltri-L-glutamate binding site. 3 residues coordinate Zn(2+): His-641, Cys-643, and Glu-665. The active-site Proton donor is the His-694. Cys-726 provides a ligand contact to Zn(2+).

It belongs to the vitamin-B12 independent methionine synthase family. It depends on Zn(2+) as a cofactor.

The catalysed reaction is 5-methyltetrahydropteroyltri-L-glutamate + L-homocysteine = tetrahydropteroyltri-L-glutamate + L-methionine. The protein operates within amino-acid biosynthesis; L-methionine biosynthesis via de novo pathway; L-methionine from L-homocysteine (MetE route): step 1/1. In terms of biological role, catalyzes the transfer of a methyl group from 5-methyltetrahydrofolate to homocysteine resulting in methionine formation. The polypeptide is 5-methyltetrahydropteroyltriglutamate--homocysteine methyltransferase (Salmonella agona (strain SL483)).